The sequence spans 485 residues: Mitochondria-eating protein (485 aa).

Positions 112–210 (TSHERELNEV…SILSSESSIL (99 aa)) form a coiled coil. 2 stretches are compositionally biased toward low complexity: residues 214–241 (LSRS…SPTS) and 471–485 (RSRS…TPRF). Disordered stretches follow at residues 214–244 (LSRS…SAKL) and 451–485 (RSRS…TPRF).

This sequence belongs to the MIEAP family.

It is found in the cytoplasm. It localises to the mitochondrion outer membrane. Its subcellular location is the mitochondrion matrix. In terms of biological role, key regulator of mitochondrial quality that mediates the repairing or degradation of unhealthy mitochondria in response to mitochondrial damage. Mediator of mitochondrial protein catabolic process (also named MALM) by mediating the degradation of damaged proteins inside mitochondria by promoting the accumulation in the mitochondrial matrix of hydrolases that are characteristic of the lysosomal lumen. Also involved in mitochondrion degradation of damaged mitochondria by promoting the formation of vacuole-like structures (named MIV), which engulf and degrade unhealthy mitochondria by accumulating lysosomes. Binds cardiolipin. May form molecular condensates (non-membrane-bounded organelles) within mitochondria that compartmentalize and promote cardiolipin metabolism. This is Mitochondria-eating protein (spata18) from Xenopus laevis (African clawed frog).